The chain runs to 257 residues: MKIAITGKGGVGKTFIASTLMRLFEKNGFKVIGVDCDPNPTLALAFGVEEEIVPLSKRHDIIEERTGAKPGTYGNIFKINPKVDDLIDKVGYKIGNITLLVMGTIEEGGEGCVCPASVLLRRLLRHLILKRDEVVILDMEAGIEHFGRKTIDTVDLMLIVIEPTKKSLITAKRMKKLANDLGIKNLGVIVNKVRNEDKELLKDIIKEELGLEVLGFVPYDEEVIKSEFLGKPINLDSKAAKEIEKIFNYIIKLKNTT.

Residue 7 to 14 (GKGGVGKT) participates in ATP binding.

To M.jannaschii MJ0084 and MJ0685.

This is an uncharacterized protein from Methanocaldococcus jannaschii (strain ATCC 43067 / DSM 2661 / JAL-1 / JCM 10045 / NBRC 100440) (Methanococcus jannaschii).